The primary structure comprises 587 residues: Pyruvate kinase (587 aa).

Residue Arg33 coordinates substrate. K(+) contacts are provided by Asn35, Ser37, Asp67, and Thr68. 35–38 contributes to the ATP binding site; it reads NFSH. ATP-binding residues include Arg74 and Lys157. Lys221 is a substrate binding site. Glu223 contributes to the Mg(2+) binding site. Substrate-binding residues include Gly246, Asp247, and Thr279. Mg(2+) is bound at residue Asp247.

This sequence belongs to the pyruvate kinase family. In the C-terminal section; belongs to the PEP-utilizing enzyme family. As to quaternary structure, homotetramer. Requires Mg(2+) as cofactor. It depends on K(+) as a cofactor. Post-translationally, the N-terminus is blocked.

It carries out the reaction pyruvate + ATP = phosphoenolpyruvate + ADP + H(+). It functions in the pathway carbohydrate degradation; glycolysis; pyruvate from D-glyceraldehyde 3-phosphate: step 5/5. With respect to regulation, exhibits homotropic positive cooperativity for PEP. Allosterically activated by ribose-5-phosphate, AMP and other nucleoside monophosphates but not by fructose-1,6-bisphosphate. Its function is as follows. Catalyzes the phosphoryl transfer from phosphoenolpyruvate (PEP) to ADP to form pyruvate and ATP. Has a broad specificity for nucleoside diphosphates and can use ADP, GDP, IDP and UDP. This chain is Pyruvate kinase (pyk), found in Geobacillus stearothermophilus (Bacillus stearothermophilus).